Reading from the N-terminus, the 243-residue chain is UPF0246 protein SAG2081 (243 aa).

It belongs to the UPF0246 family.

This chain is UPF0246 protein SAG2081, found in Streptococcus agalactiae serotype V (strain ATCC BAA-611 / 2603 V/R).